The primary structure comprises 1108 residues: Isoleucine--tRNA ligase (1108 aa).

The short motif at P53 to H63 is the 'HIGH' region element. The short motif at K654 to R658 is the 'KMSKS' region element. Residue K657 participates in ATP binding.

This sequence belongs to the class-I aminoacyl-tRNA synthetase family. IleS type 2 subfamily. As to quaternary structure, monomer. Zn(2+) is required as a cofactor.

It localises to the cytoplasm. It carries out the reaction tRNA(Ile) + L-isoleucine + ATP = L-isoleucyl-tRNA(Ile) + AMP + diphosphate. Its function is as follows. Catalyzes the attachment of isoleucine to tRNA(Ile). As IleRS can inadvertently accommodate and process structurally similar amino acids such as valine, to avoid such errors it has two additional distinct tRNA(Ile)-dependent editing activities. One activity is designated as 'pretransfer' editing and involves the hydrolysis of activated Val-AMP. The other activity is designated 'posttransfer' editing and involves deacylation of mischarged Val-tRNA(Ile). The chain is Isoleucine--tRNA ligase from Rickettsia bellii (strain OSU 85-389).